Here is a 203-residue protein sequence, read N- to C-terminus: MAGEIPDFQAEVRTGTGKGAARQARREGYVPGIVYGGGQEPLSINVKYNDLLNRLKKGRFLQTLFNLKVEGQEDVRVICRGVQRDVVKDLPTHVDFMRLRRTSRINLFIHVTFENHDQAPGLKRGGTLTVVRPEVELEVTAGDIPDHITVDLTGKQIGDVIHIQDIALPEGAVPTINRNFVIANISAPSGLRSSDNEEEAAEA.

The protein belongs to the bacterial ribosomal protein bL25 family. CTC subfamily. As to quaternary structure, part of the 50S ribosomal subunit; part of the 5S rRNA/L5/L18/L25 subcomplex. Contacts the 5S rRNA. Binds to the 5S rRNA independently of L5 and L18.

In terms of biological role, this is one of the proteins that binds to the 5S RNA in the ribosome where it forms part of the central protuberance. The polypeptide is Large ribosomal subunit protein bL25 (Cereibacter sphaeroides (strain ATCC 17025 / ATH 2.4.3) (Rhodobacter sphaeroides)).